The sequence spans 785 residues: LPS-assembly protein LptD (785 aa).

Residues 1-58 (MSCSCLCMSLYRGADRIGRFYTAHCPQDMALCMHRQKLNPLALALAAAFALNAPAALA) form the signal peptide.

It belongs to the LptD family. As to quaternary structure, component of the lipopolysaccharide transport and assembly complex. Interacts with LptE and LptA.

Its subcellular location is the cell outer membrane. Together with LptE, is involved in the assembly of lipopolysaccharide (LPS) at the surface of the outer membrane. The protein is LPS-assembly protein LptD of Chromobacterium violaceum (strain ATCC 12472 / DSM 30191 / JCM 1249 / CCUG 213 / NBRC 12614 / NCIMB 9131 / NCTC 9757 / MK).